We begin with the raw amino-acid sequence, 632 residues long: MAU2 chromatid cohesion factor homolog (632 aa).

TPR repeat units follow at residues 453–486 and 493–526; these read GGFY…ANAE and SCSL…ASKI.

The protein belongs to the SCC4/mau-2 family. Interacts with Nipped-B to form the cohesin loading complex.

The protein resides in the nucleus. Its subcellular location is the nucleoplasm. In terms of biological role, required for association of the cohesin complex with chromatin during interphase. Plays a role in sister chromatid cohesion and normal progression through prometaphase. The chain is MAU2 chromatid cohesion factor homolog from Drosophila melanogaster (Fruit fly).